Consider the following 132-residue polypeptide: L-ectoine synthase (132 aa).

It belongs to the ectoine synthase family.

The enzyme catalyses (2S)-4-acetamido-2-aminobutanoate = L-ectoine + H2O. It functions in the pathway amine and polyamine biosynthesis; ectoine biosynthesis; L-ectoine from L-aspartate 4-semialdehyde: step 3/3. Catalyzes the circularization of gamma-N-acetyl-alpha,gamma-diaminobutyric acid (ADABA) to ectoine (1,4,5,6-tetrahydro-2-methyl-4-pyrimidine carboxylic acid), which is an excellent osmoprotectant. The sequence is that of L-ectoine synthase from Hahella chejuensis (strain KCTC 2396).